We begin with the raw amino-acid sequence, 1028 residues long: MFTASPMSLSKILARRDWENPGVTQWHRLPAHAPFNSWRDEASARADDNASRKRSLNGDWQFSYYAAPEQVPDSWVTEDCADAVTTPVPSNWQMQGFDTPIYTNVTYPIPVNPPFVPAENPTGCYSLTFEVDEQWLESGQTRIVFDGVNSAFYLWCNGKWMGYSQDSRLPAEFDLSAVLRPGTNRLAVLVLRWCDGSYLEDQDMWRMSGIFRDVSLLHKPHTHIADYHAVTELNADYDRAKLQVEVALAGEQFADCEVTVTLWRDGLSVATASAKPGSAIIDERGNWAERLNVTLPVNDPALWSAETPELYRLTFALRDGQGEILDVEACDVGFRCVEISNGLLKVNGKPLLIRGVNRHEHHPENGQVMDEATMRRDIELMKQHNFNAVRCSHYPNHPLWYTLCDRYGLYVVDEANIETHGMVPMSRLADDPRWLPAMSERVTRMVLRDRNHPSIIIWSLGNESGHGANHDALYRWVKTTDPTRPVQYEGGGANTAATDIVCPMYARVDQDQPFEAVPKWSLKKWIGMPDETRPLILCEYAHAMGNSFGGFAKYWQAFRNHPRLQGGFVWDWVDQALTKKDDNGNAFWAYGGDFGDTPNDRQFCLNGLVFPDRTPHPALFEAQRAQQFFNFTLVSTSPLVIDVHSDYLFRQCDNEQLRWNIARDGEVLASGEVALTIAPQQTQRIEIDAPEFAAAAGEIWLNVDIVQTAATAWSPADHRCAWDQWQLPAPLYIAPPVEGTAKPDLKVKEDVLEVSHQSQRWHFDRASGNLTQWWNNGTATLLAPLNDNFTRAPLDNDIGVSEATRIDPNAWVERWKAAGMYNLTPRLLLCEGEQLAQAVTITTLHAWESNGKALFLSRKVWKIDRAGVLHGDVQVQVANDIPQPARIGLSCQLAQTPQTASWLGLGPDENYPDRKLAARQGRWTLPLDALHTAYIFPTDNGLRCDTRELTFDTHQLQGDFHFSLSRYSQQQLRDTSHHHLLEAEPGCWLNIDAFHMGVGGDDSWSPSVSPEFILQRREMRYAFSWRQD.

The substrate site is built by N104 and D203. D203 is a binding site for Na(+). E418, H420, and E463 together coordinate Mg(2+). Residues E463 and E539–H542 each bind substrate. The Proton donor role is filled by E463. E539 functions as the Nucleophile in the catalytic mechanism. N599 contacts Mg(2+). F603 and N606 together coordinate Na(+). N606 and W1004 together coordinate substrate.

Belongs to the glycosyl hydrolase 2 family. Homotetramer. Mg(2+) serves as cofactor. Requires Na(+) as cofactor.

The catalysed reaction is Hydrolysis of terminal non-reducing beta-D-galactose residues in beta-D-galactosides.. The chain is Beta-galactosidase from Enterobacter sp. (strain 638).